A 95-amino-acid chain; its full sequence is Small ribosomal subunit protein uS19 (95 aa).

Residues 73–95 (EFSPTRTYRGHGADKNAKGSKKK) form a disordered region.

It belongs to the universal ribosomal protein uS19 family.

Functionally, protein S19 forms a complex with S13 that binds strongly to the 16S ribosomal RNA. The polypeptide is Small ribosomal subunit protein uS19 (Deinococcus geothermalis (strain DSM 11300 / CIP 105573 / AG-3a)).